Here is a 307-residue protein sequence, read N- to C-terminus: Dihydroorotate dehydrogenase A (fumarate) (307 aa).

FMN-binding positions include Ser-21 and 46–47 (KT). Residues Lys-46, 70-74 (NSVGL), and Asn-130 each bind substrate. FMN is bound at residue Asn-130. Cys-133 acts as the Nucleophile in catalysis. Residues Lys-168 and Ile-194 each coordinate FMN. A substrate-binding site is contributed by 195–196 (NT). FMN is bound by residues Gly-220, 246-247 (GG), and 268-269 (GS).

Belongs to the dihydroorotate dehydrogenase family. Type 1 subfamily. Homodimer. It depends on FMN as a cofactor.

Its subcellular location is the cytoplasm. The catalysed reaction is (S)-dihydroorotate + fumarate = orotate + succinate. The protein operates within pyrimidine metabolism; UMP biosynthesis via de novo pathway. Its function is as follows. Catalyzes the conversion of dihydroorotate to orotate with fumarate as the electron acceptor. The chain is Dihydroorotate dehydrogenase A (fumarate) (pyrD) from Lactobacillus helveticus (strain DPC 4571).